A 357-amino-acid polypeptide reads, in one-letter code: 3-isopropylmalate dehydrogenase (357 aa).

Gly-76–Glu-89 lines the NAD(+) pocket. Substrate-binding residues include Arg-96, Arg-106, Arg-134, and Asp-224. Mg(2+) contacts are provided by Asp-224, Asp-248, and Asp-252. NAD(+) is bound at residue Gly-282–Asn-294.

The protein belongs to the isocitrate and isopropylmalate dehydrogenases family. LeuB type 1 subfamily. In terms of assembly, homodimer. It depends on Mg(2+) as a cofactor. The cofactor is Mn(2+).

The protein resides in the cytoplasm. It catalyses the reaction (2R,3S)-3-isopropylmalate + NAD(+) = 4-methyl-2-oxopentanoate + CO2 + NADH. It participates in amino-acid biosynthesis; L-leucine biosynthesis; L-leucine from 3-methyl-2-oxobutanoate: step 3/4. Its function is as follows. Catalyzes the oxidation of 3-carboxy-2-hydroxy-4-methylpentanoate (3-isopropylmalate) to 3-carboxy-4-methyl-2-oxopentanoate. The product decarboxylates to 4-methyl-2 oxopentanoate. This chain is 3-isopropylmalate dehydrogenase, found in Xanthomonas campestris pv. campestris (strain 8004).